The primary structure comprises 380 residues: Set1 complex component swd3 (380 aa).

WD repeat units follow at residues 52-91 (GHEK…LECT), 94-133 (GHYR…SVRC), 136-177 (GHTN…RMLP), 179-219 (HSEP…KTLV), 221-262 (PINV…RIFD), 291-330 (NDSS…IIDD), and 335-374 (SDDP…SKHE). Ser379 carries the post-translational modification Phosphoserine.

Component of the Set1 complex composed of ash2, sdc1, set1, shg1, spp1, swd1, swd2 and swd3.

Its subcellular location is the nucleus. The Set1 complex specifically methylates 'Lys-4' of histone H3. This chain is Set1 complex component swd3, found in Schizosaccharomyces pombe (strain 972 / ATCC 24843) (Fission yeast).